The sequence spans 397 residues: Alanine racemase, biosynthetic (397 aa).

The active-site Proton acceptor; specific for D-alanine is Lys42. The residue at position 42 (Lys42) is an N6-(pyridoxal phosphate)lysine. Arg136 serves as a coordination point for substrate. Catalysis depends on Tyr257, which acts as the Proton acceptor; specific for L-alanine. Met305 lines the substrate pocket. A disordered region spans residues 373 to 397 (ANRPTEAMSNPSRAKSRPMDKQALI).

It belongs to the alanine racemase family. Pyridoxal 5'-phosphate serves as cofactor.

It catalyses the reaction L-alanine = D-alanine. It participates in amino-acid biosynthesis; D-alanine biosynthesis; D-alanine from L-alanine: step 1/1. It functions in the pathway cell wall biogenesis; peptidoglycan biosynthesis. Catalyzes the interconversion of L-alanine and D-alanine. Provides the D-alanine required for cell wall biosynthesis. The chain is Alanine racemase, biosynthetic (alr) from Mesorhizobium japonicum (strain LMG 29417 / CECT 9101 / MAFF 303099) (Mesorhizobium loti (strain MAFF 303099)).